Here is a 316-residue protein sequence, read N- to C-terminus: MSNKDQILTSPYLQFNRSQWAALRDSVPMTLTEGEIARLKGINEDLSLEEVAEIYLPLSRLLNFYISSNLRRQAVLEQFLGTNGQRIPYIISIAGSVAVGKSTTARVLQALLSRWPEHRRVELITTDGFLHPNAVLKERNLMKKKGFPQSYDMHRLVKFVSDIKSGVPNVTAPVYSHLIYDVIPDGDKVVNQPDILILEGLNVLQSGMDYPHDPHHVFVSDFVDFSIYVDAPEDLLQRWYINRFLKFREGAFTDPDSYFHHYAKLSEDEAVNIATQLWKEINWLNLKENILPTRERASLIMTKSANHAVDCVRLRK.

95-102 (GSVAVGKS) is a binding site for ATP.

It belongs to the prokaryotic pantothenate kinase family.

The protein resides in the cytoplasm. The catalysed reaction is (R)-pantothenate + ATP = (R)-4'-phosphopantothenate + ADP + H(+). It functions in the pathway cofactor biosynthesis; coenzyme A biosynthesis; CoA from (R)-pantothenate: step 1/5. The protein is Pantothenate kinase of Cronobacter sakazakii (strain ATCC BAA-894) (Enterobacter sakazakii).